We begin with the raw amino-acid sequence, 113 residues long: UPF0122 protein LCA_0713 (113 aa).

The protein belongs to the UPF0122 family.

In terms of biological role, might take part in the signal recognition particle (SRP) pathway. This is inferred from the conservation of its genetic proximity to ftsY/ffh. May be a regulatory protein. The protein is UPF0122 protein LCA_0713 of Latilactobacillus sakei subsp. sakei (strain 23K) (Lactobacillus sakei subsp. sakei).